A 218-amino-acid chain; its full sequence is Protein GrpE (218 aa).

Residues 1-10 (MSGEASTPAQ) show a composition bias toward polar residues. 2 disordered regions span residues 1 to 44 (MSGE…DPAE) and 198 to 218 (SMGP…AEDS). The segment covering 200-218 (GPGPSADAEGAASAEAEDS) has biased composition (low complexity).

This sequence belongs to the GrpE family. As to quaternary structure, homodimer.

The protein localises to the cytoplasm. Functionally, participates actively in the response to hyperosmotic and heat shock by preventing the aggregation of stress-denatured proteins, in association with DnaK and GrpE. It is the nucleotide exchange factor for DnaK and may function as a thermosensor. Unfolded proteins bind initially to DnaJ; upon interaction with the DnaJ-bound protein, DnaK hydrolyzes its bound ATP, resulting in the formation of a stable complex. GrpE releases ADP from DnaK; ATP binding to DnaK triggers the release of the substrate protein, thus completing the reaction cycle. Several rounds of ATP-dependent interactions between DnaJ, DnaK and GrpE are required for fully efficient folding. The polypeptide is Protein GrpE (Parasynechococcus marenigrum (strain WH8102)).